Reading from the N-terminus, the 106-residue chain is Transcriptional and immune response regulator (106 aa).

In terms of assembly, monomer. Interacts with NOTCH2 (via ANK repeats), the interaction inhibits the nuclear translocation of NOTCH2 N2ICD. Interacts (C-terminus) with CBY1 (C-terminus), TCIM competes with CTNNB1 for the interaction with CBY1.

The protein localises to the cytoplasm. The protein resides in the nucleus. Its subcellular location is the nucleolus. It is found in the nucleus speckle. Seems to be involved in the regulation of cell growth an differentiation, may play different and opposite roles depending on the tissue or cell type. May enhance the WNT-CTNNB1 pathway by relieving antagonistic activity of CBY1. Enhances the proliferation of follicular dendritic cells. Plays a role in the mitogen-activated MAPK2/3 signaling pathway, positively regulates G1-to-S-phase transition of the cell cycle. In endothelial cells, enhances key inflammatory mediators and inflammatory response through the modulation of NF-kappaB transcriptional regulatory activity. Involved in the regulation of heat shock response, seems to play a positive feedback with HSF1 to modulate heat-shock downstream gene expression. Plays a role in the regulation of hematopoiesis even if the mechanisms are unknown. In cancers such as thyroid or lung cancer, it has been described as promoter of cell proliferation, G1-to-S-phase transition and inhibitor of apoptosis. However, it negatively regulates self-renewal of liver cancer cells via suppresion of NOTCH2 signaling. The protein is Transcriptional and immune response regulator (TCIM) of Bos taurus (Bovine).